Here is a 95-residue protein sequence, read N- to C-terminus: Progonadoliberin-1 (95 aa).

Positions 1–23 (MAPQTSNLWLLLVVMMVMSQGCC) are cleaved as a signal peptide. Q24 bears the Pyrrolidone carboxylic acid mark. At G33 the chain carries Glycine amide.

This sequence belongs to the GnRH family.

The protein localises to the secreted. In terms of biological role, stimulates the secretion of gonadotropins. This chain is Progonadoliberin-1 (gnrh1), found in Pagrus major (Red sea bream).